We begin with the raw amino-acid sequence, 410 residues long: 3-phosphoshikimate 1-carboxyvinyltransferase (410 aa).

3-phosphoshikimate-binding residues include Lys-20, Ser-21, and Arg-25. Residue Lys-20 coordinates phosphoenolpyruvate. 2 residues coordinate phosphoenolpyruvate: Gly-87 and Arg-115. 6 residues coordinate 3-phosphoshikimate: Ser-157, Ser-158, Gln-159, Ser-183, Asp-293, and Lys-320. Gln-159 contacts phosphoenolpyruvate. The active-site Proton acceptor is Asp-293. Arg-324, Arg-365, and Lys-391 together coordinate phosphoenolpyruvate.

Belongs to the EPSP synthase family. As to quaternary structure, monomer.

It is found in the cytoplasm. It catalyses the reaction 3-phosphoshikimate + phosphoenolpyruvate = 5-O-(1-carboxyvinyl)-3-phosphoshikimate + phosphate. It participates in metabolic intermediate biosynthesis; chorismate biosynthesis. Functionally, catalyzes the transfer of the enolpyruvyl moiety of phosphoenolpyruvate (PEP) to the 5-hydroxyl of shikimate-3-phosphate (S3P) to produce enolpyruvyl shikimate-3-phosphate and inorganic phosphate. This is 3-phosphoshikimate 1-carboxyvinyltransferase from Thermoplasma volcanium (strain ATCC 51530 / DSM 4299 / JCM 9571 / NBRC 15438 / GSS1).